A 415-amino-acid polypeptide reads, in one-letter code: MFERSRFTIDQIDPEVFAAIQQENQRQEDHIELIASENYTSPAVMAAQGSQLTNKYAEGYPGKRYYGGCEYVDVVEQLAIDRVKQLFGAEAANVQPNSGSQANQGVYFAVLKPGDTIMGMSLAEGGHLTHGMALNMSGKWFNVVSYGLNAQEDIDYDALEKLAQEKKPKLIIAGASAFALRIDFERISKVAKSIGAYFMVDMAHYAGLIAAGVYPNPVPHADFVTTTTHKSLRGPRGGVILMKAEHEKAINSAIFPGIQGGPLMHVIAGKAVAFKEALTPEFKEYQQQVVKNAAVLAETLIARGLRIVSGRTESHVMLVDLRAKNITGKEAERILGEAHITVNKNAIPNDPEKPFVTSGIRLGSPAMTTRGFKEEEARIVGNLIADVLDNPHDAANIASVREQAAALTKRFPVYG.

Residues Leu122 and 126–128 each bind (6S)-5,6,7,8-tetrahydrofolate; that span reads GHL. Position 230 is an N6-(pyridoxal phosphate)lysine (Lys230).

This sequence belongs to the SHMT family. As to quaternary structure, homodimer. Pyridoxal 5'-phosphate serves as cofactor.

It localises to the cytoplasm. It carries out the reaction (6R)-5,10-methylene-5,6,7,8-tetrahydrofolate + glycine + H2O = (6S)-5,6,7,8-tetrahydrofolate + L-serine. Its pathway is one-carbon metabolism; tetrahydrofolate interconversion. It functions in the pathway amino-acid biosynthesis; glycine biosynthesis; glycine from L-serine: step 1/1. In terms of biological role, catalyzes the reversible interconversion of serine and glycine with tetrahydrofolate (THF) serving as the one-carbon carrier. This reaction serves as the major source of one-carbon groups required for the biosynthesis of purines, thymidylate, methionine, and other important biomolecules. Also exhibits THF-independent aldolase activity toward beta-hydroxyamino acids, producing glycine and aldehydes, via a retro-aldol mechanism. The sequence is that of Serine hydroxymethyltransferase from Cupriavidus necator (strain ATCC 17699 / DSM 428 / KCTC 22496 / NCIMB 10442 / H16 / Stanier 337) (Ralstonia eutropha).